Here is a 116-residue protein sequence, read N- to C-terminus: Toxin CSTX-10 (116 aa).

An N-terminal signal peptide occupies residues 1-20; sequence MKVLVIFAVLSLVIFSNCSA. Residues 21–47 constitute a propeptide that is removed on maturation; the sequence is ETDEDFFGEESFEADDIIPFIAKEQVR. Cystine bridges form between Cys53–Cys68, Cys60–Cys77, Cys67–Cys94, and Cys79–Cys92.

Expressed by the venom gland.

The protein localises to the secreted. It is found in the target cell membrane. In terms of biological role, spider venom toxin that shows calcium channel blocking activity and exhibits cytolytic activity by affecting the outer leaflet curvature and/or pore formation across the membrane. It blocks L-type calcium channels (Cav1/CACNA1) in mammalian neurons at nanomolar concentrations. Furthermore, it produces a slow voltage-independent block of mid/low and high voltage-activated calcium channels in cockroach neurons. Potassium ions, histamine, M-ctenitoxin-Cs1a (AC P83619), CSTX-9 (AC P58604), and CSTX-13 (AC P83919) synergistically increase the insecticidal activity of this toxin. In vivo, it causes paralysis in blow flies and provokes death in drosophila. The chain is Toxin CSTX-10 from Cupiennius salei (American wandering spider).